The primary structure comprises 378 residues: Glutamate 5-kinase (378 aa).

Lys20 serves as a coordination point for ATP. Positions 60, 147, and 159 each coordinate substrate. Residues 179-180 and 221-227 each bind ATP; these read TD and TGGMATK. The PUA domain occupies 286–364; that stretch reads AGDIVIDAGA…QEIYKVLGYE (79 aa).

Belongs to the glutamate 5-kinase family.

The protein localises to the cytoplasm. The catalysed reaction is L-glutamate + ATP = L-glutamyl 5-phosphate + ADP. It functions in the pathway amino-acid biosynthesis; L-proline biosynthesis; L-glutamate 5-semialdehyde from L-glutamate: step 1/2. Its function is as follows. Catalyzes the transfer of a phosphate group to glutamate to form L-glutamate 5-phosphate. The protein is Glutamate 5-kinase of Photobacterium profundum (strain SS9).